The chain runs to 427 residues: Isocitrate lyase (427 aa).

Position 89 to 91 (89 to 91 (SGW)) interacts with substrate. Asp150 serves as a coordination point for Mg(2+). Catalysis depends on Cys188, which acts as the Proton acceptor. Substrate contacts are provided by residues 189–190 (GH), Arg225, 310–314 (NCSPS), and Thr344.

Belongs to the isocitrate lyase/PEP mutase superfamily. Isocitrate lyase family. As to quaternary structure, homotetramer. Mg(2+) is required as a cofactor.

The catalysed reaction is D-threo-isocitrate = glyoxylate + succinate. It functions in the pathway carbohydrate metabolism; glyoxylate cycle; (S)-malate from isocitrate: step 1/2. In terms of biological role, involved in the metabolic adaptation in response to environmental changes. Catalyzes the reversible formation of succinate and glyoxylate from isocitrate, a key step of the glyoxylate cycle, which operates as an anaplerotic route for replenishing the tricarboxylic acid cycle during growth on fatty acid substrates. This chain is Isocitrate lyase (aceA), found in Halalkalibacterium halodurans (strain ATCC BAA-125 / DSM 18197 / FERM 7344 / JCM 9153 / C-125) (Bacillus halodurans).